The primary structure comprises 405 residues: Phosphoglycerate kinase (405 aa).

Substrate is bound by residues 21-23 (DFN), Arg-38, 59-62 (HQSR), Arg-116, and Arg-156. ATP contacts are provided by residues Glu-330 and 355–358 (GGHT).

Belongs to the phosphoglycerate kinase family. In terms of assembly, monomer.

The protein localises to the cytoplasm. The catalysed reaction is (2R)-3-phosphoglycerate + ATP = (2R)-3-phospho-glyceroyl phosphate + ADP. The protein operates within carbohydrate degradation; glycolysis; pyruvate from D-glyceraldehyde 3-phosphate: step 2/5. The polypeptide is Phosphoglycerate kinase (Methanocorpusculum labreanum (strain ATCC 43576 / DSM 4855 / Z)).